Reading from the N-terminus, the 130-residue chain is Ribosome-binding factor A (130 aa).

It belongs to the RbfA family. Monomer. Binds 30S ribosomal subunits, but not 50S ribosomal subunits or 70S ribosomes.

It localises to the cytoplasm. One of several proteins that assist in the late maturation steps of the functional core of the 30S ribosomal subunit. Associates with free 30S ribosomal subunits (but not with 30S subunits that are part of 70S ribosomes or polysomes). Required for efficient processing of 16S rRNA. May interact with the 5'-terminal helix region of 16S rRNA. The protein is Ribosome-binding factor A of Prochlorococcus marinus (strain MIT 9301).